Consider the following 93-residue polypeptide: Phosphoribosyl-ATP pyrophosphatase (93 aa).

This sequence belongs to the PRA-PH family.

It localises to the cytoplasm. It carries out the reaction 1-(5-phospho-beta-D-ribosyl)-ATP + H2O = 1-(5-phospho-beta-D-ribosyl)-5'-AMP + diphosphate + H(+). Its pathway is amino-acid biosynthesis; L-histidine biosynthesis; L-histidine from 5-phospho-alpha-D-ribose 1-diphosphate: step 2/9. This chain is Phosphoribosyl-ATP pyrophosphatase, found in Mycobacterium leprae (strain Br4923).